We begin with the raw amino-acid sequence, 588 residues long: MEYAAIHHQPFSTDAYSYDGRTVHIKIRTKKGDADHIRFIWGDPYEYNDGKWSANEQPMRKIAATEMHDYWFAEVVPPFRRLQYAFVVTDDHEDIFFGSSGVCPYNEKTLETIHYYFKFPFVHEADTFQAPEWVKSTVWYQIFPERFANGREDLSPKNALPWGSKDPGVNDFFGGDLQGIVDKLDYLEDLGVNGIYLTPIFSAPSNHKYDTLDYFSIDPHFGDPEIFRTLVSQLHQRGMRIMLDAVFNHIGSASPQWQDVVKNGDQSRYKDWFHIHSFPVTDDNYDRFAFTADMPKLNTANPEVQKYLLDIALYWIREFDIDGWRLDVANEVDHVFWKTFRQAVSTEKPDVYILGEIWHSAEPWLRGDEFHAAMNYPFTEPMIEYFADQTISASRMAHRVNAHLMNGMKQANEVMFNLLDSHDTKRLLTRCRNDEKKARALLAFMFAQTGSPCIYYGTEIGLDGENDPLCRKCMVWEKEKQNQDMLQFMKRLIALRKQENTLLTEGHLEWNLLDDKNDFISFSRTLDEKILIYFFNQGNVVQHISLRELNIDRNNKICDAWTEQPLHYHDVIAVQPGEFLILSAAAPV.

Ca(2+)-binding residues include Asn-149, Ser-155, Gly-174, and Asp-176. 2 residues coordinate substrate: His-249 and Arg-325. Asp-327 serves as the catalytic Nucleophile. Glu-356 serves as the catalytic Proton donor. Substrate is bound by residues 422–423, Asp-467, and Arg-471; that span reads HD.

This sequence belongs to the glycosyl hydrolase 13 family. BbmA subfamily. In terms of assembly, monomer or homodimer; in equilibrium. Ca(2+) is required as a cofactor.

It is found in the cytoplasm. Functionally, hydrolyzes beta-cyclodextrin to maltose and glucose, soluble starch to maltose and glucose, and pullulan to panose with trace amounts of maltose and glucose. It is also able to hydrolyze acarbose. Can also exhibit a transglycosylation activity transferring glucose or maltose to another moiety of sugars by forming alpha-(1,6)- and alpha-(1,3)-glycosidic linkages upon the hydrolysis of substrate at concentrations of 5% or higher. The chain is Intracellular maltogenic amylase (bbmA) from Bacillus subtilis.